Consider the following 68-residue polypeptide: Beta-defensin 1 (68 aa).

Positions 1–21 are cleaved as a signal peptide; it reads MRTSYLLLFTLCLLLSEMASG. Positions 22-32 are excised as a propeptide; that stretch reads DNFLTGLGHRS. 3 disulfides stabilise this stretch: cysteine 37–cysteine 66, cysteine 44–cysteine 59, and cysteine 49–cysteine 67.

It belongs to the beta-defensin family. Monomer. Homodimer.

It localises to the secreted. Its subcellular location is the membrane. Functionally, has bactericidal activity. May act as a ligand for C-C chemokine receptor CCR6. Positively regulates the sperm motility and bactericidal activity in a CCR6-dependent manner. Binds to CCR6 and triggers Ca2+ mobilization in the sperm which is important for its motility. The polypeptide is Beta-defensin 1 (DEFB1) (Cercopithecus erythrogaster (Red-bellied monkey)).